The following is an 811-amino-acid chain: Phosphoinositide 3-kinase adapter protein 1 (811 aa).

The 139-residue stretch at Arg-8–Ser-146 folds into the TIR domain. A necessary and sufficient to mediate inhibition of NF-kappa-B downstream of activated TLRs; may mediate interaction with MYD88 and TIRAP region spans residues Cys-10–Asp-145. The disordered stretch occupies residues Ser-146 to Asn-169. The DBB domain maps to Val-182 to Phe-318. At Tyr-264 the chain carries Phosphotyrosine. Phosphotyrosine; by SYK occurs at positions 420, 445, and 460. Tyr-513 carries the phosphotyrosine; by ABL1 modification. The segment at Asp-525 to Glu-551 is disordered. Positions Pro-530–Asn-550 are enriched in pro residues. A phosphotyrosine; by ABL1 mark is found at Tyr-553, Tyr-570, and Tyr-594. The residue at position 642 (Ser-642) is a Phosphoserine. A Phosphotyrosine; by ABL1 modification is found at Tyr-694. The tract at residues Val-702–Arg-811 is disordered. Basic and acidic residues predominate over residues Thr-707–Thr-716. The span at Asp-717 to Ser-740 shows a compositional bias: low complexity. Ser-718 is subject to Phosphoserine. A compositionally biased stretch (pro residues) spans His-801 to Arg-811.

Homooligomer. Interacts (phosphorylated on tyrosine residues within YXXM motifs) with PIK3R1 (via SH2 domain); required for BCR- and TLR-mediated activation of phosphoinositide 3-kinase. Interacts (via polyproline C-terminal region) with ABI1 (via SH3 domain); the interaction promotes phosphorylation of PIK3AP1 by ABL1. May interact with MYD88 and TIRAP. Post-translationally, constitutively phosphorylated. Phosphorylated on tyrosine residues in C-terminal region by ABL1. Phosphorylated on tyrosine residues within the YXXM motifs by BTK and SYK. Isoform 1 and isoform 2 are phosphorylated on tyrosine residues, most likely within the YXXM motifs, via CD19 activation. Toll-like receptor activation induces appearance of a phosphorylated form associated with membranes. As to expression, predominantly expressed in spleen (at protein level). Expressed at lower levels in thymus, liver and lung. Expressed in B-cells, macrophages and natural killer (NK) cells.

It localises to the cytoplasm. It is found in the cell membrane. Functionally, signaling adapter that contributes to B-cell development by linking B-cell receptor (BCR) signaling to the phosphoinositide 3-kinase (PI3K)-Akt signaling pathway. Has a complementary role to the BCR coreceptor CD19, coupling BCR and PI3K activation by providing a docking site for the PI3K subunit PIK3R1. Alternatively, links Toll-like receptor (TLR) signaling to PI3K activation, a process preventing excessive inflammatory cytokine production. Also involved in the activation of PI3K in natural killer cells. May be involved in the survival of mature B-cells via activation of REL. In Mus musculus (Mouse), this protein is Phosphoinositide 3-kinase adapter protein 1 (Pik3ap1).